Reading from the N-terminus, the 412-residue chain is CCA-adding enzyme (412 aa).

Ser41 and Lys44 together coordinate ATP. CTP is bound by residues Ser41 and Lys44. Residues Asp53, Asp55, and Asp106 each coordinate Mg(2+). The ATP site is built by His129, Lys149, and Tyr158. Residues His129, Lys149, and Tyr158 each coordinate CTP.

This sequence belongs to the tRNA nucleotidyltransferase/poly(A) polymerase family. Archaeal CCA-adding enzyme subfamily. In terms of assembly, homodimer. It depends on Mg(2+) as a cofactor.

It catalyses the reaction a tRNA precursor + 2 CTP + ATP = a tRNA with a 3' CCA end + 3 diphosphate. The catalysed reaction is a tRNA with a 3' CCA end + 2 CTP + ATP = a tRNA with a 3' CCACCA end + 3 diphosphate. Functionally, catalyzes the addition and repair of the essential 3'-terminal CCA sequence in tRNAs without using a nucleic acid template. Adds these three nucleotides in the order of C, C, and A to the tRNA nucleotide-73, using CTP and ATP as substrates and producing inorganic pyrophosphate. tRNA 3'-terminal CCA addition is required both for tRNA processing and repair. Also involved in tRNA surveillance by mediating tandem CCA addition to generate a CCACCA at the 3' terminus of unstable tRNAs. While stable tRNAs receive only 3'-terminal CCA, unstable tRNAs are marked with CCACCA and rapidly degraded. The chain is CCA-adding enzyme from Saccharolobus islandicus (strain Y.N.15.51 / Yellowstone #2) (Sulfolobus islandicus).